A 126-amino-acid polypeptide reads, in one-letter code: Large ribosomal subunit protein bL17 (126 aa).

Belongs to the bacterial ribosomal protein bL17 family. In terms of assembly, part of the 50S ribosomal subunit. Contacts protein L32.

The protein is Large ribosomal subunit protein bL17 of Coxiella burnetii (strain CbuK_Q154) (Coxiella burnetii (strain Q154)).